A 574-amino-acid chain; its full sequence is DNA-directed primase/polymerase protein (574 aa).

The stretch at 2-22 forms a coiled coil; that stretch reads KRKWEERVKKVEELASYYERN. Residues arginine 76, 116-118, 167-171, 291-294, and lysine 300 each bind substrate; these read DLE, KFSRH, and RNFR. Residues aspartate 116 and glutamate 118 each contribute to the Mn(2+) site. Residues cysteine 424, histidine 431, cysteine 451, and cysteine 456 each coordinate Zn(2+). The Zinc knuckle motif signature appears at 424–457; it reads CENIGRAHRSNNIMILVDLKKEVWYQKCHDPVCR.

The protein belongs to the eukaryotic-type primase small subunit family. Mn(2+) is required as a cofactor.

It localises to the nucleus. The protein localises to the mitochondrion matrix. It is found in the chromosome. It catalyses the reaction ssDNA + n NTP = ssDNA/pppN(pN)n-1 hybrid + (n-1) diphosphate.. It carries out the reaction DNA(n) + a 2'-deoxyribonucleoside 5'-triphosphate = DNA(n+1) + diphosphate. In terms of biological role, DNA primase and DNA polymerase required to tolerate replication-stalling lesions by bypassing them. Required to facilitate mitochondrial and nuclear replication fork progression by initiating de novo DNA synthesis using dNTPs and acting as an error-prone DNA polymerase able to bypass certain DNA lesions. Shows a high capacity to tolerate DNA damage lesions such as 8oxoG and abasic sites in DNA. Provides different translesion synthesis alternatives when DNA replication is stalled: able to synthesize DNA primers downstream of lesions, such as UV lesions, R-loops and G-quadruplexes, to allow DNA replication to continue. Can also realign primers ahead of 'unreadable lesions' such as abasic sites and 6-4 photoproduct (6-4 pyrimidine-pyrimidinone), thereby skipping the lesion. Repriming avoids fork degradation while leading to accumulation of internal ssDNA gaps behind the forks. Also able to incorporate nucleotides opposite DNA lesions such as 8oxoG, like a regular translesion synthesis DNA polymerase. Also required for reinitiating stalled forks after ultraviolet (UV) damage during nuclear DNA replication. Required for mitochondrial DNA (mtDNA) synthesis and replication, by reinitiating synthesis after UV damage or in the presence of chain-terminating nucleotides. In addition to its role in DNA damage response, also required to maintain efficient nuclear and mitochondrial DNA replication in unperturbed cells. The chain is DNA-directed primase/polymerase protein from Gallus gallus (Chicken).